We begin with the raw amino-acid sequence, 224 residues long: tRNA (guanine-N(7)-)-methyltransferase (224 aa).

3 residues coordinate S-adenosyl-L-methionine: Glu-57, Asp-82, and Asp-109. Residue Asp-167 participates in substrate binding.

This sequence belongs to the class I-like SAM-binding methyltransferase superfamily. TrmB family.

The enzyme catalyses guanosine(46) in tRNA + S-adenosyl-L-methionine = N(7)-methylguanosine(46) in tRNA + S-adenosyl-L-homocysteine. It functions in the pathway tRNA modification; N(7)-methylguanine-tRNA biosynthesis. Functionally, catalyzes the formation of N(7)-methylguanine at position 46 (m7G46) in tRNA. This is tRNA (guanine-N(7)-)-methyltransferase from Chloroflexus aggregans (strain MD-66 / DSM 9485).